Here is a 368-residue protein sequence, read N- to C-terminus: Proline-rich protein 5-like (368 aa).

At Ser-28 the chain carries Phosphoserine. A disordered region spans residues 312–368 (LGEESGGEDKCLLLQPSFPPPHRQCSSEPNITDGPDEPEQGATGSQEDSELNCASLS). Residues 353-368 (ATGSQEDSELNCASLS) show a composition bias toward polar residues.

Belongs to the PROTOR family. Interacts with the mammalian target of rapamycin complex 2 (mTORC2) which contains MTOR, MLST8, PRR5, RICTOR, MAPKAP1 and DEPTOR. Interacts with RFFL. Interacts (via C-terminus) with ZFP36 (via C-terminus); this interaction may accelerate ZFP36-mediated mRNA decay during stress. Interacts with RICTOR. Post-translationally, ubiquitinated. Ubiquitination by RFFL promotes proteasomal degradation of PRR5L thereby modifying the substrate-specific activity of the mTORC2 complex. Ubiquitination by RFFL is stimulated by LPA/lysophosphatidic acid.

In terms of biological role, associates with the mTORC2 complex that regulates cellular processes including survival and organization of the cytoskeleton. Regulates the activity of the mTORC2 complex in a substrate-specific manner preventing for instance the specific phosphorylation of PKCs and thereby controlling cell migration. Plays a role in the stimulation of ZFP36-mediated mRNA decay of several ZFP36-associated mRNAs, such as TNF-alpha and GM-CSF, in response to stress. Required for ZFP36 localization to cytoplasmic stress granule (SG) and P-body (PB) in response to stress. This chain is Proline-rich protein 5-like (PRR5L), found in Bos taurus (Bovine).